A 249-amino-acid polypeptide reads, in one-letter code: Probable transcriptional regulatory protein Tfu_2096 (249 aa).

It belongs to the TACO1 family.

It is found in the cytoplasm. This is Probable transcriptional regulatory protein Tfu_2096 from Thermobifida fusca (strain YX).